Consider the following 332-residue polypeptide: UDP-N-acetylenolpyruvoylglucosamine reductase (332 aa).

Residues 15-184 (IDVSAACFLE…TYVSFRLSKR (170 aa)) enclose the FAD-binding PCMH-type domain. Arg-160 is a catalytic residue. The active-site Proton donor is the Ser-232. The active site involves Glu-328.

This sequence belongs to the MurB family. The cofactor is FAD.

The protein resides in the cytoplasm. It carries out the reaction UDP-N-acetyl-alpha-D-muramate + NADP(+) = UDP-N-acetyl-3-O-(1-carboxyvinyl)-alpha-D-glucosamine + NADPH + H(+). The protein operates within cell wall biogenesis; peptidoglycan biosynthesis. Its function is as follows. Cell wall formation. This chain is UDP-N-acetylenolpyruvoylglucosamine reductase, found in Bacteroides fragilis (strain YCH46).